We begin with the raw amino-acid sequence, 187 residues long: Adenylate kinase 1 (187 aa).

Residue 14–19 participates in ATP binding; it reads GSGKGT. The tract at residues 34 to 63 is NMP; that stretch reads STGDMLRQAIADGTELGNQAKGYMDKGELV. Residues Thr-35, Arg-40, 61–63, 89–92, and Gln-96 contribute to the AMP site; these read ELV and GFPR. Positions 130 to 136 are LID; the sequence is ARGRADD. Arg-131 serves as a coordination point for ATP. Residues Arg-133 and Arg-144 each contribute to the AMP site. Residue Gln-172 participates in ATP binding.

This sequence belongs to the adenylate kinase family. In terms of assembly, monomer.

It localises to the cytoplasm. The catalysed reaction is AMP + ATP = 2 ADP. It participates in purine metabolism; AMP biosynthesis via salvage pathway; AMP from ADP: step 1/1. In terms of biological role, catalyzes the reversible transfer of the terminal phosphate group between ATP and AMP. Plays an important role in cellular energy homeostasis and in adenine nucleotide metabolism. The chain is Adenylate kinase 1 from Synechocystis sp. (strain ATCC 27184 / PCC 6803 / Kazusa).